Consider the following 491-residue polypeptide: UDP-N-acetylmuramate--L-alanine ligase (491 aa).

126–132 (GTHGKTT) is a binding site for ATP.

This sequence belongs to the MurCDEF family.

It localises to the cytoplasm. It catalyses the reaction UDP-N-acetyl-alpha-D-muramate + L-alanine + ATP = UDP-N-acetyl-alpha-D-muramoyl-L-alanine + ADP + phosphate + H(+). Its pathway is cell wall biogenesis; peptidoglycan biosynthesis. In terms of biological role, cell wall formation. This is UDP-N-acetylmuramate--L-alanine ligase from Salmonella arizonae (strain ATCC BAA-731 / CDC346-86 / RSK2980).